The primary structure comprises 601 residues: Probable translation initiation factor IF-2 (601 aa).

The region spanning 10–227 is the tr-type G domain; sequence LRAPIVVVLG…VLAGLAQRYL (218 aa). Residues 19 to 26 form a G1 region; it reads GHVDAGKT. Position 19–26 (19–26) interacts with GTP; that stretch reads GHVDAGKT. The tract at residues 44–48 is G2; the sequence is TMTQH. The tract at residues 83–86 is G3; it reads DTPG. GTP-binding positions include 83–87 and 137–140; these read DTPGH and NKID. Residues 137–140 are G4; sequence NKID. Residues 205–207 are G5; sequence SAV.

It belongs to the TRAFAC class translation factor GTPase superfamily. Classic translation factor GTPase family. IF-2 subfamily.

In terms of biological role, function in general translation initiation by promoting the binding of the formylmethionine-tRNA to ribosomes. Seems to function along with eIF-2. The protein is Probable translation initiation factor IF-2 of Thermofilum pendens (strain DSM 2475 / Hrk 5).